We begin with the raw amino-acid sequence, 486 residues long: Protein pleiotropic regulatory locus 1 (486 aa).

The tract at residues 62-101 (EPVVSQPPRQPDRINEQPGPSNALSLAAPEGSKSTQKGAT) is disordered. WD repeat units lie at residues 174-204 (GHLG…KIWD), 216-246 (GHIE…KCWD), 258-288 (GHLS…RVWD), 300-330 (GHDN…KFWD), 342-371 (HHKK…KKFS), 384-413 (QQKT…WFWD), and 433-463 (ESEA…KMWK). 2 short sequence motifs (DWD box) span residues 275 to 290 (LLTG…WDIR) and 317 to 332 (VVTG…WDLR). The tract at residues 465–486 (DENATPETHPINFKPPKEIRRF) is disordered.

The protein belongs to the WD repeat PRL1/PRL2 family. Component of the multiprotein assembly MOS4-associated complex (MAC) at least composed of MOS4, CDC5, PRL1 and PRP19. Interacts with CDC5. Component of the CUL4-RBX1-DDB1-PRL1 E3 ubiquitin-protein ligase complex. Interacts with DDB1A through its DWD motif. Interacts with AKIN10, AKIN11 and PIPC. Interacts with KAP2.

The protein localises to the nucleus. It participates in protein modification; protein ubiquitination. Its function is as follows. Pleiotropic regulator of glucose, stress and hormone responses. Also regulates cytochrome P450 CYP90A1/CPD. Coordinates the expression of hormone- and stress-related genes and genes related to cell wall modification and growth, leading to altered sugar-dependent growth and developmental responses. Component of the MAC complex that probably regulates defense responses through transcriptional control and thereby is essential for plant innate immunity. By suppressing the expression of several (1)O(2)-responsive genes, PRL1 seems to play a major role in modulating responses of plants to environmental changes by interconnecting (1)O(2)-mediated retrograde signaling with other signaling pathways. Acts as a negative regulator of SNF1-related protein kinases AKIN10 and AKIN11 via the inhibition of their interaction with SKP1/ASK1. Component of the CUL4-RBX1-DDB1-PRL1 E3 ubiquitin-protein ligase complex, PRL1 may function as the substrate recognition module within this complex, leading to the AKIN10 degradation. The protein is Protein pleiotropic regulatory locus 1 (PRL1) of Arabidopsis thaliana (Mouse-ear cress).